The following is a 620-amino-acid chain: Chaperone protein DnaK (620 aa).

Position 197 is a phosphothreonine; by autocatalysis (Thr197). The tract at residues 597 to 620 (AMANKNNAEQPKKKDDDVIDAEVE) is disordered.

The protein belongs to the heat shock protein 70 family.

Its function is as follows. Acts as a chaperone. This is Chaperone protein DnaK from Helicobacter pylori (strain Shi470).